We begin with the raw amino-acid sequence, 88 residues long: UPF0223 protein OB1419 (88 aa).

The protein belongs to the UPF0223 family.

The sequence is that of UPF0223 protein OB1419 from Oceanobacillus iheyensis (strain DSM 14371 / CIP 107618 / JCM 11309 / KCTC 3954 / HTE831).